Consider the following 383-residue polypeptide: ERCC4 domain-containing protein EP364R (383 aa).

The region spanning 3–101 (FLVADHREHH…QLYFFVEGPA (99 aa)) is the ERCC4 domain. The disordered stretch occupies residues 336-367 (LHKVSDEASENASHDASENASDKVSSPTGHQT). Residues 347–356 (ASHDASENAS) show a composition bias toward basic and acidic residues. Residues 357-367 (DKVSSPTGHQT) show a composition bias toward polar residues.

The protein belongs to the asfivirus EP364R family.

Plays a role in the inhibition of type I interferon signaling pathway. Mechanistically, specifically interacts with 2',3'-cGAMP and cleaves it via its phosphodiesterase activity. In turn, prevents 2',3'-cGAMP interaction with host ER-resident STING1 leading to inhibition of downstream signaling pathway and type I interferon production. In Ornithodoros (relapsing fever ticks), this protein is ERCC4 domain-containing protein EP364R.